Here is a 163-residue protein sequence, read N- to C-terminus: Cell division protein SepF (163 aa).

A disordered region spans residues 25–53 (SVAPHSGEERESAFSRRSAERAERTERPT). Basic and acidic residues predominate over residues 30-51 (SGEERESAFSRRSAERAERTER).

The protein belongs to the SepF family. Homodimer. Interacts with FtsZ.

The protein localises to the cytoplasm. Functionally, cell division protein that is part of the divisome complex and is recruited early to the Z-ring. Probably stimulates Z-ring formation, perhaps through the cross-linking of FtsZ protofilaments. Its function overlaps with FtsA. In Heliobacterium modesticaldum (strain ATCC 51547 / Ice1), this protein is Cell division protein SepF.